Reading from the N-terminus, the 1159-residue chain is ATP-dependent helicase/deoxyribonuclease subunit B (1159 aa).

Residues 1–275 (MEFNTYIGRA…TYFNTFYRYN (275 aa)) form the UvrD-like helicase ATP-binding domain. Residue 8–15 (GRAGTGKS) participates in ATP binding. Residues 269–583 (NTFYRYNNDD…SIGTMDLAKV (315 aa)) enclose the UvrD-like helicase C-terminal domain. [4Fe-4S] cluster contacts are provided by C784, C1112, C1115, and C1121.

Belongs to the helicase family. AddB/RexB type 1 subfamily. In terms of assembly, heterodimer of AddA and AddB. The cofactor is Mg(2+). [4Fe-4S] cluster is required as a cofactor.

Its function is as follows. The heterodimer acts as both an ATP-dependent DNA helicase and an ATP-dependent, dual-direction single-stranded exonuclease. Recognizes the chi site generating a DNA molecule suitable for the initiation of homologous recombination. The AddB subunit has 5' -&gt; 3' nuclease activity but not helicase activity. The sequence is that of ATP-dependent helicase/deoxyribonuclease subunit B from Staphylococcus epidermidis (strain ATCC 35984 / DSM 28319 / BCRC 17069 / CCUG 31568 / BM 3577 / RP62A).